Here is a 421-residue protein sequence, read N- to C-terminus: UDP-N-acetylglucosamine 1-carboxyvinyltransferase (421 aa).

22–23 is a binding site for phosphoenolpyruvate; the sequence is KN. UDP-N-acetyl-alpha-D-glucosamine is bound at residue R93. Catalysis depends on C117, which acts as the Proton donor. C117 carries the 2-(S-cysteinyl)pyruvic acid O-phosphothioketal modification. Residues 122–126, D308, and V330 each bind UDP-N-acetyl-alpha-D-glucosamine; that span reads RPVDL.

The protein belongs to the EPSP synthase family. MurA subfamily.

The protein resides in the cytoplasm. It catalyses the reaction phosphoenolpyruvate + UDP-N-acetyl-alpha-D-glucosamine = UDP-N-acetyl-3-O-(1-carboxyvinyl)-alpha-D-glucosamine + phosphate. Its pathway is cell wall biogenesis; peptidoglycan biosynthesis. Functionally, cell wall formation. Adds enolpyruvyl to UDP-N-acetylglucosamine. This is UDP-N-acetylglucosamine 1-carboxyvinyltransferase from Pseudomonas paraeruginosa (strain DSM 24068 / PA7) (Pseudomonas aeruginosa (strain PA7)).